A 98-amino-acid polypeptide reads, in one-letter code: Large ribosomal subunit protein uL23 (98 aa).

The protein belongs to the universal ribosomal protein uL23 family. As to quaternary structure, part of the 50S ribosomal subunit. Contacts protein L29, and trigger factor when it is bound to the ribosome.

Its function is as follows. One of the early assembly proteins it binds 23S rRNA. One of the proteins that surrounds the polypeptide exit tunnel on the outside of the ribosome. Forms the main docking site for trigger factor binding to the ribosome. The protein is Large ribosomal subunit protein uL23 of Nitrosococcus oceani (strain ATCC 19707 / BCRC 17464 / JCM 30415 / NCIMB 11848 / C-107).